Reading from the N-terminus, the 801-residue chain is Quinoprotein glucose dehydrogenase A (801 aa).

A signal peptide spans 1 to 33; that stretch reads MNQPTSRSGLTTFTVIIIGLLALFLLIGGIWLA. 4 consecutive transmembrane segments (helical) span residues 39-55, 59-79, 94-108, and 119-138; these read IYYI…AWQL, ASTA…WSVW, ILGI…PAVT, and VALS…SIFN. D471 functions as the Proton acceptor in the catalytic mechanism.

This sequence belongs to the bacterial PQQ dehydrogenase family. Monomer. Requires pyrroloquinoline quinone as cofactor.

Its subcellular location is the cell inner membrane. The catalysed reaction is D-glucose + A = D-glucono-1,5-lactone + AH2. Functionally, catalyzes an exceptionally high rate of oxidation of a wide range of aldose sugars, including D-glucose, galactose, arabinose and xylose, and also the disaccharides lactose, cellobiose and maltose. The polypeptide is Quinoprotein glucose dehydrogenase A (gdhA) (Acinetobacter calcoaceticus).